The sequence spans 81 residues: ATP synthase subunit c, chloroplastic (81 aa).

The next 2 membrane-spanning stretches (helical) occupy residues proline 3–glycine 23 and leucine 57–alanine 77.

It belongs to the ATPase C chain family. In terms of assembly, F-type ATPases have 2 components, F(1) - the catalytic core - and F(0) - the membrane proton channel. F(1) has five subunits: alpha(3), beta(3), gamma(1), delta(1), epsilon(1). F(0) has four main subunits: a(1), b(1), b'(1) and c(10-14). The alpha and beta chains form an alternating ring which encloses part of the gamma chain. F(1) is attached to F(0) by a central stalk formed by the gamma and epsilon chains, while a peripheral stalk is formed by the delta, b and b' chains.

Its subcellular location is the plastid. The protein resides in the chloroplast thylakoid membrane. Its function is as follows. F(1)F(0) ATP synthase produces ATP from ADP in the presence of a proton or sodium gradient. F-type ATPases consist of two structural domains, F(1) containing the extramembraneous catalytic core and F(0) containing the membrane proton channel, linked together by a central stalk and a peripheral stalk. During catalysis, ATP synthesis in the catalytic domain of F(1) is coupled via a rotary mechanism of the central stalk subunits to proton translocation. Key component of the F(0) channel; it plays a direct role in translocation across the membrane. A homomeric c-ring of between 10-14 subunits forms the central stalk rotor element with the F(1) delta and epsilon subunits. The sequence is that of ATP synthase subunit c, chloroplastic from Ceratophyllum demersum (Rigid hornwort).